Reading from the N-terminus, the 406-residue chain is Serine/threonine transporter SstT (406 aa).

9 consecutive transmembrane segments (helical) span residues 11–31, 45–65, 79–99, 141–161, 185–205, 216–236, 298–318, 330–350, and 357–377; these read IGLV…GWLM, FVGA…MAAI, VLIM…VASF, AIAN…GLAL, FVIA…IAET, LLTI…PIIV, MAGA…TLGV, VVAT…LLLI, and FNIP…IGVV.

Belongs to the dicarboxylate/amino acid:cation symporter (DAACS) (TC 2.A.23) family.

The protein resides in the cell inner membrane. The enzyme catalyses L-serine(in) + Na(+)(in) = L-serine(out) + Na(+)(out). It carries out the reaction L-threonine(in) + Na(+)(in) = L-threonine(out) + Na(+)(out). Involved in the import of serine and threonine into the cell, with the concomitant import of sodium (symport system). The polypeptide is Serine/threonine transporter SstT (Psychrobacter sp. (strain PRwf-1)).